The following is a 247-amino-acid chain: ATP synthase subunit a, chloroplastic (247 aa).

The next 5 helical transmembrane spans lie at 38 to 58 (QVLITSWVVIAILLASATLAV), 95 to 115 (VPFIGTMFLFIFVSNWSGALL), 134 to 154 (INTTVALALLTSVAYFYAGLS), 199 to 219 (LVVVVLVSLVPSVVPIPVMFL), and 220 to 240 (GLFTSGIQALIFATLAAAYIG).

The protein belongs to the ATPase A chain family. In terms of assembly, F-type ATPases have 2 components, CF(1) - the catalytic core - and CF(0) - the membrane proton channel. CF(1) has five subunits: alpha(3), beta(3), gamma(1), delta(1), epsilon(1). CF(0) has four main subunits: a, b, b' and c.

The protein localises to the plastid. Its subcellular location is the chloroplast thylakoid membrane. Its function is as follows. Key component of the proton channel; it plays a direct role in the translocation of protons across the membrane. In Lactuca sativa (Garden lettuce), this protein is ATP synthase subunit a, chloroplastic.